Consider the following 542-residue polypeptide: Dihydropyrimidinase (542 aa).

Residues H62, H64, and K167 each coordinate Zn(2+). At K167 the chain carries N6-carboxylysine. Y172 lines the substrate pocket. H199 and H255 together coordinate Zn(2+). Residue S331 participates in substrate binding. D358 serves as a coordination point for Zn(2+). N392 serves as a coordination point for substrate.

Belongs to the metallo-dependent hydrolases superfamily. Hydantoinase/dihydropyrimidinase family. In terms of assembly, homotetramer. Requires Zn(2+) as cofactor. Post-translationally, carboxylation allows a single lysine to coordinate two zinc ions.

It carries out the reaction 5,6-dihydrouracil + H2O = 3-(carbamoylamino)propanoate + H(+). Catalyzes the second step of the reductive pyrimidine degradation, the reversible hydrolytic ring opening of dihydropyrimidines. Can catalyze the ring opening of 5,6-dihydrouracil to N-carbamyl-alanine and of 5,6-dihydrothymine to N-carbamyl-amino isobutyrate. In Lachancea kluyveri (strain ATCC 58438 / CBS 3082 / BCRC 21498 / NBRC 1685 / JCM 7257 / NCYC 543 / NRRL Y-12651) (Yeast), this protein is Dihydropyrimidinase (PYD2).